The chain runs to 303 residues: Coenzyme PQQ synthesis protein B (303 aa).

The protein belongs to the PqqB family.

It functions in the pathway cofactor biosynthesis; pyrroloquinoline quinone biosynthesis. May be involved in the transport of PQQ or its precursor to the periplasm. The protein is Coenzyme PQQ synthesis protein B of Pseudomonas entomophila (strain L48).